Reading from the N-terminus, the 101-residue chain is Apolipoprotein C-II (101 aa).

The signal sequence occupies residues 1–22 (MGARHLLALLLVLLVLGFEVQG). Positions 66–74 (TMDEKIRDM) are lipid binding. The tract at residues 78–101 (STAAVSTYVGIFTDQLLSLLKGED) is lipoprotein lipase cofactor.

Belongs to the apolipoprotein C2 family. In terms of processing, proapolipoprotein C-II is synthesized as a sialic acid containing glycoprotein which is subsequently desialylated prior to its proteolytic processing. Post-translationally, proapolipoprotein C-II, the major form found in plasma undergoes proteolytic cleavage of its N-terminal hexapeptide to generate apolipoprotein C-II, which occurs as the minor form in plasma.

The protein resides in the secreted. Component of chylomicrons, very low-density lipoproteins (VLDL), low-density lipoproteins (LDL), and high-density lipoproteins (HDL) in plasma. Plays an important role in lipoprotein metabolism as an activator of lipoprotein lipase. Both proapolipoprotein C-II and apolipoprotein C-II can activate lipoprotein lipase. This is Apolipoprotein C-II (APOC2) from Tapirus terrestris (Lowland tapir).